The chain runs to 188 residues: GMP synthase [glutamine-hydrolyzing] subunit A (188 aa).

Positions 3-188 (PLYVVNNYGQ…FSICTGQNKG (186 aa)) constitute a Glutamine amidotransferase type-1 domain. The active-site Nucleophile is the C75. Active-site residues include H162 and E164.

Heterodimer composed of a glutamine amidotransferase subunit (A) and a GMP-binding subunit (B).

The catalysed reaction is XMP + L-glutamine + ATP + H2O = GMP + L-glutamate + AMP + diphosphate + 2 H(+). The protein operates within purine metabolism; GMP biosynthesis; GMP from XMP (L-Gln route): step 1/1. In terms of biological role, catalyzes the synthesis of GMP from XMP. The chain is GMP synthase [glutamine-hydrolyzing] subunit A from Methanospirillum hungatei JF-1 (strain ATCC 27890 / DSM 864 / NBRC 100397 / JF-1).